A 280-amino-acid polypeptide reads, in one-letter code: Dexamethasone-induced Ras-related protein 1 (280 aa).

Cys-11 carries the S-nitrosocysteine modification. 31–38 serves as a coordination point for GTP; sequence GSSKVGKT. Residues 53-61 carry the Effector region motif; sequence YTPTIEDFH. GTP is bound by residues 78 to 82 and 145 to 148; these read DTSGN and NKGD. Cys-277 carries the post-translational modification Cysteine methyl ester. Residue Cys-277 is the site of S-farnesyl cysteine attachment. A propeptide spans 278–280 (removed in mature form); the sequence is VIS.

The protein belongs to the small GTPase superfamily. RasD family. Component of a complex, at least composed of APBB1, RASD1/DEXRAS1 and APP. Interacts with APBB1/FE65. Forms a ternary complex with CAPON and NOS1. Post-translationally, S-nitrosylation stimulates guanine-nucleotide exchange activity. Expressed in brain, heart, kidney and liver.

Its subcellular location is the cell membrane. The protein localises to the cytoplasm. It localises to the perinuclear region. The protein resides in the nucleus. Its function is as follows. Small GTPase. Negatively regulates the transcription regulation activity of the APBB1/FE65-APP complex via its interaction with APBB1/FE65. The protein is Dexamethasone-induced Ras-related protein 1 (Rasd1) of Mus musculus (Mouse).